Consider the following 337-residue polypeptide: Ketol-acid reductoisomerase (NADP(+)) (337 aa).

Residues 3–183 (IELFYDADAD…GGGRAGIIPT (181 aa)) enclose the KARI N-terminal Rossmann domain. NADP(+)-binding positions include 26 to 29 (YGSQ), R49, S52, S54, and 84 to 87 (DTSQ). Residue H109 is part of the active site. NADP(+) is bound at residue G135. Positions 184–329 (TFEAETVTDL…AKLRDLMSWV (146 aa)) constitute a KARI C-terminal knotted domain. Mg(2+) is bound by residues D192, E196, E228, and E232. S253 contacts substrate.

This sequence belongs to the ketol-acid reductoisomerase family. Mg(2+) serves as cofactor.

It catalyses the reaction (2R)-2,3-dihydroxy-3-methylbutanoate + NADP(+) = (2S)-2-acetolactate + NADPH + H(+). The enzyme catalyses (2R,3R)-2,3-dihydroxy-3-methylpentanoate + NADP(+) = (S)-2-ethyl-2-hydroxy-3-oxobutanoate + NADPH + H(+). It functions in the pathway amino-acid biosynthesis; L-isoleucine biosynthesis; L-isoleucine from 2-oxobutanoate: step 2/4. Its pathway is amino-acid biosynthesis; L-valine biosynthesis; L-valine from pyruvate: step 2/4. Its function is as follows. Involved in the biosynthesis of branched-chain amino acids (BCAA). Catalyzes an alkyl-migration followed by a ketol-acid reduction of (S)-2-acetolactate (S2AL) to yield (R)-2,3-dihydroxy-isovalerate. In the isomerase reaction, S2AL is rearranged via a Mg-dependent methyl migration to produce 3-hydroxy-3-methyl-2-ketobutyrate (HMKB). In the reductase reaction, this 2-ketoacid undergoes a metal-dependent reduction by NADPH to yield (R)-2,3-dihydroxy-isovalerate. This chain is Ketol-acid reductoisomerase (NADP(+)), found in Corynebacterium efficiens (strain DSM 44549 / YS-314 / AJ 12310 / JCM 11189 / NBRC 100395).